A 373-amino-acid chain; its full sequence is Chaperone protein DnaJ (373 aa).

The 66-residue stretch at 5–70 folds into the J domain; that stretch reads DFYATLGVAR…EKRAMYDQYG (66 aa). The CR-type zinc finger occupies 134-212; that stretch reads GVKKRINIPT…CRGAGRNKAV (79 aa). Zn(2+) contacts are provided by C147, C150, C164, C167, C186, C189, C200, and C203. CXXCXGXG motif repeat units lie at residues 147 to 154, 164 to 171, 186 to 193, and 200 to 207; these read CDVCNGSG, CPTCKGSG, CPTCHGAG, and CVKCRGAG.

This sequence belongs to the DnaJ family. Homodimer. Requires Zn(2+) as cofactor.

It localises to the cytoplasm. Participates actively in the response to hyperosmotic and heat shock by preventing the aggregation of stress-denatured proteins and by disaggregating proteins, also in an autonomous, DnaK-independent fashion. Unfolded proteins bind initially to DnaJ; upon interaction with the DnaJ-bound protein, DnaK hydrolyzes its bound ATP, resulting in the formation of a stable complex. GrpE releases ADP from DnaK; ATP binding to DnaK triggers the release of the substrate protein, thus completing the reaction cycle. Several rounds of ATP-dependent interactions between DnaJ, DnaK and GrpE are required for fully efficient folding. Also involved, together with DnaK and GrpE, in the DNA replication of plasmids through activation of initiation proteins. The sequence is that of Chaperone protein DnaJ from Neisseria meningitidis serogroup C (strain 053442).